Here is a 347-residue protein sequence, read N- to C-terminus: NADH-ubiquinone oxidoreductase chain 2 (347 aa).

Helical transmembrane passes span 1–21, 25–45, 59–79, 96–116, 122–142, 145–165, 178–198, 201–221, 237–257, 276–296, and 326–346; these read MNPL…MIVM, HWLT…PILM, YFLT…INLL, IIMT…FWVP, IQLS…MSIL, IFPT…VAIG, IMAY…AYNP, TLLN…MFML, APLL…LPPL, IITP…YMRL, and VSPL…LMLL.

This sequence belongs to the complex I subunit 2 family. Core subunit of respiratory chain NADH dehydrogenase (Complex I) which is composed of 45 different subunits. Interacts with TMEM242.

It localises to the mitochondrion inner membrane. The enzyme catalyses a ubiquinone + NADH + 5 H(+)(in) = a ubiquinol + NAD(+) + 4 H(+)(out). Its function is as follows. Core subunit of the mitochondrial membrane respiratory chain NADH dehydrogenase (Complex I) which catalyzes electron transfer from NADH through the respiratory chain, using ubiquinone as an electron acceptor. Essential for the catalytic activity and assembly of complex I. The chain is NADH-ubiquinone oxidoreductase chain 2 from Boneia bidens (Manado fruit bat).